Here is a 216-residue protein sequence, read N- to C-terminus: Maintenance of carboxysome distribution protein A (216 aa).

Residues G16, G17, G19, K20, T21, T22, and Q45 each coordinate ATP. Residue T21 coordinates Mg(2+).

Belongs to the ParA family. McdA subfamily. In terms of assembly, self-associates, associates with McdB.

Its subcellular location is the cytoplasm. It is found in the nucleoid. It catalyses the reaction ATP + H2O = ADP + phosphate + H(+). In terms of biological role, mcdA and McdB together mediate carboxysome positioning on the nucleoid and prevent their aggregation in the cell. McdA is an ATPase that forms dynamic gradients on the nucleoid in response to adapter protein McdB, which associates with carboxysomes. The interplay between McdA gradients on the nucleoid and McdB-bound carboxysomes result in the equal spacing of Cbs along the cell length. Incorrect positioning (aggregation) of carboxysomes results in reduced CO(2) fixation by encapsulated form 1 ribulose-1,5-bisphosphate carboxylase (RuBisCO, cbbL/cbbS), which leads to slower growth. This is Maintenance of carboxysome distribution protein A from Halothiobacillus neapolitanus (strain ATCC 23641 / c2) (Thiobacillus neapolitanus).